We begin with the raw amino-acid sequence, 326 residues long: Glycine N(alpha)-acyltransferase (326 aa).

This sequence belongs to the acetyltransferase family.

It carries out the reaction a (3R)-hydroxyacyl-[ACP] + glycine = a lyso-glycine lipid + holo-[ACP] + H(+). It catalyses the reaction (3R)-hydroxyhexadecanoyl-[ACP] + glycine = N-[(3R)-3-hydroxyhexadecanoyl]-glycine + holo-[ACP] + H(+). The protein operates within lipid metabolism. Its function is as follows. Is involved in the production of glycine lipids (GL), which are phosphorus-free membrane lipids. Catalyzes the first step of GL biosynthesis, i.e. the N-acylation of glycine via addition of a 3-hydroxy fatty acyl group, to form a range of monoacylated glycine (also named lyso-glycine lipids or lyso-GL). As an example, catalyzes the production of commendamide, an N-acylated (3-OH C16:0) derivative of glycine with hemolytic activity and the ability to solubilize cholesterol micelles; this compound can also activate NF-kB through the G-protein coupled receptor GPCR G2A/132. The polypeptide is Glycine N(alpha)-acyltransferase (Phocaeicola vulgatus (strain ATCC 8482 / DSM 1447 / JCM 5826 / CCUG 4940 / NBRC 14291 / NCTC 11154) (Bacteroides vulgatus)).